A 657-amino-acid chain; its full sequence is Protein PSK SIMULATOR 1 (657 aa).

Polar residues-rich tracts occupy residues M1–P15, H26–G39, E62–Q76, and R540–P556. 2 disordered regions span residues M1–D80 and P534–G559. The N-myristoyl glycine moiety is linked to residue G2.

It is found in the nucleus. Promotes seedling growth probably via the regulation of phytosulfokine (PSK) signaling; PSK are peptide phytohormones acting as growth factors. Together with PSI2 and PSI3, required during vegetative growth and reproduction. May also have a function in carbohydrate metabolism. This is Protein PSK SIMULATOR 1 from Arabidopsis thaliana (Mouse-ear cress).